The sequence spans 359 residues: 4-galactosyl-N-acetylglucosaminide 3-alpha-L-fucosyltransferase FUT6 (359 aa).

The Cytoplasmic segment spans residues 1-14 (MDPLGPAKPQWSWR). Residues 15–34 (CCLTTLLFQLLVAVCFFSYL) form a helical; Signal-anchor for type II membrane protein membrane-spanning segment. Residues 35–359 (RVSRDDPTVY…QTRSIAAWFT (325 aa)) lie on the Lumenal side of the membrane. Residues N46, N91, N153, and N184 are each glycosylated (N-linked (GlcNAc...) asparagine). Positions 73 to 112 (KPIALPRCSEMVPGTADCNITADRKVYPQADAVIVHHREV) are determines site-specific fucosylation.

It belongs to the glycosyltransferase 10 family. In terms of assembly, homodimer and monomer. Monomer (secreted form). In terms of processing, N-glycosylated. Post-translationally, proteolytic cleavage releases a secreted glycoform of 43 kDa.

It localises to the golgi apparatus. Its subcellular location is the golgi stack membrane. The protein localises to the secreted. The enzyme catalyses a beta-D-galactosyl-(1-&gt;4)-N-acetyl-beta-D-glucosaminyl derivative + GDP-beta-L-fucose = a beta-D-galactosyl-(1-&gt;4)-[alpha-L-fucosyl-(1-&gt;3)]-N-acetyl-beta-D-glucosaminyl derivative + GDP + H(+). It carries out the reaction an N-acetyl-alpha-neuraminyl-(2-&gt;3)-beta-D-galactosyl-(1-&gt;4)-N-acetyl-beta-D-glucosaminyl derivative + GDP-beta-L-fucose = an alpha-Neu5Ac-(2-&gt;3)-beta-D-Gal-(1-&gt;4)-[alpha-L-Fuc-(1-&gt;3)]-beta-D-GlcNAc derivative + GDP + H(+). The catalysed reaction is an alpha-Neu5Ac-(2-&gt;3)-beta-D-Gal-(1-&gt;4)-beta-D-GlcNAc-(1-&gt;3)-beta-D-Gal-(1-&gt;4)-[alpha-L-Fuc-(1-&gt;3)]-beta-D-GlcNAc derivative + GDP-beta-L-fucose = an alpha-Neu5Ac-(2-&gt;3)-beta-D-Gal-(1-&gt;4)-[alpha-L-Fuc-(1-&gt;3)]-beta-D-GlcNAc-(1-&gt;3)-beta-D-Gal-(1-&gt;4)-[alpha-L-Fuc-(1-&gt;3)]-beta-D-GlcNAc derivative + GDP + H(+). It catalyses the reaction a neolactoside nLc6Cer + GDP-beta-L-fucose = beta-D-Gal-(1-&gt;4)-[alpha-L-Fuc-(1-&gt;3)]-beta-D-GlcNAc-(1-&gt;3)-beta-D-Gal-(1-&gt;4)-beta-D-GlcNAc-(1-&gt;3)-beta-D-Gal-(1-&gt;4)-beta-D-Glc-(1&lt;-&gt;1')-Cer + GDP + H(+). The enzyme catalyses a neolactoside nLc6Cer + GDP-beta-L-fucose = beta-D-galactosyl-(1-&gt;4)-N-acetyl-beta-D-glucosaminyl-(1-&gt;3)-beta-D-galactosyl-(1-&gt;4)-[alpha-L-fucosyl-(1-&gt;3)]-N-acetyl-beta-D-glucosaminyl-(1-&gt;3)-beta-D-galactosyl-(1-&gt;4)-beta-D-glucosyl-(1&lt;-&gt;1')-ceramide + GDP + H(+). It carries out the reaction a neolactoside VI(3)-alpha-NeuNAc-nLc6Cer + GDP-beta-L-fucose = a neolactoside VI(3)-alpha-NeuAc,V(3)-alphaFuc-nLc6Cer + GDP + H(+). The catalysed reaction is beta-D-galactosyl-(1-&gt;4)-N-acetyl-D-glucosamine + GDP-beta-L-fucose = beta-D-galactosyl-(1-&gt;4)-[alpha-L-fucosyl-(1-&gt;3)]-N-acetyl-D-glucosamine + GDP + H(+). It catalyses the reaction N-acetyl-alpha-neuraminosyl-(2-&gt;3)-beta-D-galactosyl-(1-&gt;4)-N-acetyl-beta-D-glucosamine + GDP-beta-L-fucose = N-acetyl-alpha-neuraminosyl-(2-&gt;3)-beta-D-galactosyl-(1-&gt;4)-[alpha-L-fucosyl-(1-&gt;3)]-N-acetyl-beta-D-glucosamine + GDP + H(+). The enzyme catalyses lactose + GDP-beta-L-fucose = beta-D-galactosyl-(1-&gt;4)-[alpha-L-fucosyl-(1-&gt;3)]-D-glucose + GDP + H(+). It carries out the reaction alpha-L-Fuc-(1-&gt;2)-beta-D-Gal-(1-&gt;4)-D-Glc + GDP-beta-L-fucose = alpha-L-Fuc-(1-&gt;2)-beta-D-Gal-(1-&gt;4)-[alpha-L-Fuc-(1-&gt;3)]-D-Glc + GDP + H(+). The catalysed reaction is a beta-D-galactosyl-(1-&gt;4)-N-acetyl-beta-D-6-sulfooxy-glucosaminyl derivative + GDP-beta-L-fucose = a beta-D-galactosyl-(1-&gt;4)-[alpha-L-fucosyl-(1-&gt;3)]-N-acetyl-beta-D-6-sulfooxy-glucosaminyl derivative + GDP + H(+). It functions in the pathway protein modification; protein glycosylation. Its function is as follows. Catalyzes the transfer of L-fucose, from a guanosine diphosphate-beta-L-fucose, to the N-acetyl glucosamine (GlcNAc) of a distal alpha2,3 sialylated lactosamine unit of a glycoprotein- or glycolipid-linked sialopolylactosamines chain or of a distal or internal lactosamine unit of a neutral glycoprotein- or glycolipid-linked polylactosamines chain through an alpha-1,3 glycosidic linkage and participates in surface expression of the sialyl Lewis X (sLe(x)), Lewis X (Le(x)) and non sialylated VIM2 determinants. Moreover transfers fucose to H-type 2 (Fucalpha1-2Galbeta1-4GlcNAc) chain acceptor substrates and participates in difucosylated sialyl Lewis x determinants. Also fucosylates a polylactosamine substrate having a 6 sulfate modification at the GlcNAc moiety and gives rise to sialyl and non-sialyl 6-sulfo lewis X. Does not have activity towards type 1 ((Galbeta1-3GlcNAc)) and H-type 1 chain (Fucalpha1-2Galbeta1-3GlcNAc) acceptors substrates. The chain is 4-galactosyl-N-acetylglucosaminide 3-alpha-L-fucosyltransferase FUT6 from Pan troglodytes (Chimpanzee).